A 571-amino-acid chain; its full sequence is Proline--tRNA ligase (571 aa).

The protein belongs to the class-II aminoacyl-tRNA synthetase family. ProS type 1 subfamily. In terms of assembly, homodimer.

It localises to the cytoplasm. It catalyses the reaction tRNA(Pro) + L-proline + ATP = L-prolyl-tRNA(Pro) + AMP + diphosphate. Catalyzes the attachment of proline to tRNA(Pro) in a two-step reaction: proline is first activated by ATP to form Pro-AMP and then transferred to the acceptor end of tRNA(Pro). As ProRS can inadvertently accommodate and process non-cognate amino acids such as alanine and cysteine, to avoid such errors it has two additional distinct editing activities against alanine. One activity is designated as 'pretransfer' editing and involves the tRNA(Pro)-independent hydrolysis of activated Ala-AMP. The other activity is designated 'posttransfer' editing and involves deacylation of mischarged Ala-tRNA(Pro). The misacylated Cys-tRNA(Pro) is not edited by ProRS. This Pseudomonas entomophila (strain L48) protein is Proline--tRNA ligase.